A 724-amino-acid chain; its full sequence is MAERRLVAVLGQVQTYVFQLEMLKRCDPAVVRELAPRVKLNALMCRYLARRLPLEAQTTPLTCALRLALAYARAEGDRVLGALAAAGDDAEAYFERTMGGACRFHARVALDTYGGRVETELQFLHDAENLLKQLNYCHLITPHAVDLSAVDEFLARTIGGGLVVPPELYDPAQPCAVCFEELCVTANQGEATHRRLLGCVCDHLTRQLAVRVDPEDVAKNLPHVHGLDEARRGRALAALAAVDAAEAREAEAASTAAAGAEAGDAGETARRRADALLDAHDVFRPASRRLYAVSELQFWLASTNQAVRALDLFTHNLDDLERRERRAEVRAAAVELALFGRRPEHFDRARAARELDIIDGLLVGGCAASPDERLEALIRACYDHHMSTPMLRMLDPDRANRDALERLLEGGDDADADGGAAGGADAGDGGVGDEDGPGAPPPADAVAWADLPAAALRDAERRRRLYADRLSRRSAASLAQCVREQRRELEKTLRVNVYGDALLHTYVAVAAGFRARRAFCEAAARAGTVVDERETGCFDAHSFMKATVQRHPVDAALLPAVTRKFFELVNGPLFAHDTHAFAQPPNTALYFAVENVGLLPHLKEELARFMVARDWCVSEFRGFYRFQTAGVTATQRQAWRYIRELVLAVAVFRSVFHCGDVEVLRADRFAGRDGLYLTYEASCPLVAVFGAGPGGIGPGTTAVLASDVFGLLHTTLQLRGAPSR.

Residues 175–203 (CAVCFEELCVTANQGEATHRRLLGCVCDH) form a C3H1-type zinc finger. A disordered region spans residues 410–445 (GGDDADADGGAAGGADAGDGGVGDEDGPGAPPPADA). The segment covering 419 to 430 (GAAGGADAGDGG) has biased composition (gly residues). 652-659 (FRSVFHCG) contributes to the ATP binding site.

This sequence belongs to the herpesviridae TRM1 protein family. In terms of assembly, associates with TRM2 and TRM3 to form the tripartite terminase complex. Interacts with portal protein.

It localises to the host nucleus. Component of the molecular motor that translocates viral genomic DNA in empty capsid during DNA packaging. Forms a tripartite terminase complex together with TRM2 and TRM3 in the host cytoplasm. Once the complex reaches the host nucleus, it interacts with the capsid portal vertex. This portal forms a ring in which genomic DNA is translocated into the capsid. TRM1 carries an endonuclease activity that plays an important role for the cleavage of concatemeric viral DNA into unit length genomes. The protein is Tripartite terminase subunit 1 of Suid herpesvirus 1 (strain Indiana-Funkhauser / Becker) (SuHV-1).